Consider the following 303-residue polypeptide: Signal recognition particle receptor FtsY (303 aa).

GTP is bound by residues 108–115, 190–194, and 254–257; these read GVNGVGKT, DTAGR, and TKLD.

It belongs to the GTP-binding SRP family. FtsY subfamily. Part of the signal recognition particle protein translocation system, which is composed of SRP and FtsY. SRP is a ribonucleoprotein composed of Ffh and a 4.5S RNA molecule.

Its subcellular location is the cell inner membrane. It localises to the cytoplasm. It carries out the reaction GTP + H2O = GDP + phosphate + H(+). Functionally, involved in targeting and insertion of nascent membrane proteins into the cytoplasmic membrane. Acts as a receptor for the complex formed by the signal recognition particle (SRP) and the ribosome-nascent chain (RNC). Interaction with SRP-RNC leads to the transfer of the RNC complex to the Sec translocase for insertion into the membrane, the hydrolysis of GTP by both Ffh and FtsY, and the dissociation of the SRP-FtsY complex into the individual components. This chain is Signal recognition particle receptor FtsY, found in Rickettsia typhi (strain ATCC VR-144 / Wilmington).